The primary structure comprises 556 residues: Double-strand-break repair protein rad21-like protein 1 (556 aa).

It belongs to the rad21 family. In terms of assembly, component of some meiotic cohesin complex composed of the SMC1 (SMC1A or SMC1B) and SMC3 heterodimer attached via their hinge domain, RAD21L which link them, and STAG3.

The protein localises to the nucleus. It localises to the chromosome. Meiosis-specific component of some cohesin complex required during the initial steps of prophase I in male meiosis. Probably required during early meiosis in males for separation of sister chromatids and homologous chromosomes. Replaces RAD21 in premeiotic S phase (during early stages of prophase I), while RAD21 reappears in later stages of prophase I. Involved in synaptonemal complex assembly, synapsis initiation and crossover recombination between homologous chromosomes during prophase I. The chain is Double-strand-break repair protein rad21-like protein 1 (RAD21L1) from Homo sapiens (Human).